A 942-amino-acid polypeptide reads, in one-letter code: Envelope glycoprotein (942 aa).

An N-terminal signal peptide occupies residues 1–80 (MDAGASYMRL…LLWTNMCVRA (80 aa)). N-linked (GlcNAc...) asparagine; by host glycosylation is found at asparagine 51, asparagine 98, asparagine 131, asparagine 176, asparagine 228, asparagine 331, asparagine 348, asparagine 354, asparagine 370, asparagine 379, asparagine 400, asparagine 404, asparagine 435, asparagine 441, asparagine 447, asparagine 457, asparagine 467, asparagine 481, asparagine 493, asparagine 503, asparagine 509, asparagine 527, and asparagine 534. Topologically, residues 81 to 799 (EDYITLISDP…SLKEVFDWSG (719 aa)) are extracellular. A fusion peptide region spans residues 631–651 (GVGLVIMLVIMAIVAAAGASL). Coiled coils occupy residues 663–713 (KAAV…RIML) and 754–789 (RELQ…DVWE). The tract at residues 697-713 (LEARVARVEAITDRIML) is immunosuppression. Residues 800–820 (WFSWLKYIPIIVVGLVGCILI) traverse the membrane as a helical segment. Topologically, residues 821–942 (RAVICVCQPL…VDCETWGKGD (122 aa)) are cytoplasmic.

The mature envelope protein (Env) consists of a trimer of SU-TM heterodimers attached by noncovalent interactions or by a labile interchain disulfide bond. Post-translationally, specific enzymatic cleavages in vivo yield mature proteins. Envelope glycoproteins are synthesized as an inactive precursor that is N-glycosylated and processed likely by host cell furin or by a furin-like protease in the Golgi to yield the mature SU and TM proteins. The cleavage site between SU and TM requires the minimal sequence [KR]-X-[KR]-R.

The protein localises to the virion membrane. It is found in the host cell membrane. Its function is as follows. The surface protein (SU) attaches the virus to the host cell by binding to its receptor. This interaction triggers the refolding of the transmembrane protein (TM) and is thought to activate its fusogenic potential by unmasking its fusion peptide. Fusion occurs at the host cell plasma membrane. Functionally, the transmembrane protein (TM) acts as a class I viral fusion protein. Under the current model, the protein has at least 3 conformational states: pre-fusion native state, pre-hairpin intermediate state, and post-fusion hairpin state. During viral and target cell membrane fusion, the coiled coil regions (heptad repeats) assume a trimer-of-hairpins structure, positioning the fusion peptide in close proximity to the C-terminal region of the ectodomain. The formation of this structure appears to drive apposition and subsequent fusion of viral and target cell membranes. Membranes fusion leads to delivery of the nucleocapsid into the cytoplasm. This chain is Envelope glycoprotein (env), found in Caprine arthritis encephalitis virus (strain 63) (CAEV-63).